The primary structure comprises 731 residues: MDGNDAPNAGQCPVMHGHAAGTGMRNHHWWPNQINLKVLHQHSSKSDPMGAQFNYAEAFKSLDLDALKADLTALMTDSQDWWPADYGHYGPLFIRMTWHAAGTYRTADGRGGGSTGNQRFAPLNSWPDNGNLDKARRLLWPIKKKYGDKISWADLLILTGNVALESMGFKTFGFAGGRPDIWEPEEDIYWGSEGEWLAPSDTANSRYSGARDLENPLAAVQMGLIYVNPEGPDGNPDIVASGHDVIETFGRMAMDEAETVALVAGGHTFGKAHGNGPASAVGPEPEAAPIEAMGLGWLSTHGSGKGADAITSGIEGAWKPHPTTWDMGYFKVLFKYDWELTKSPAGANIWLATNVEDEDMVEDAFDPSKKHRPMMTTADLSLRYHPKLLPHAKRFAEDPAAFADAFARAWFKLTHRDMGPRARYLGKEVPAEELIWQDPIPAGTQIDADDAAALKAQILASGLSVSDMVSTAWASASTFRGSDMRGGANGARIRLAPQKDWEVNEPAKLARVLGVLEGIQAGFSSGGKSVSMADLIVLAGCAGVEQAAKAGGHQIEVPFTSGRGDASAEQTDAESFAVMEPVMDGFRNYQARELSTSPEEMLVDRAQLLGLSAPEMTVLVAGLRVLGANHGGSAHGVLTNRPGVLSSDFLTNLLDMGTEWKPSGKGVYEGRDRASGAARWTATRVDLVFGSNSQLRALAERYAQDDAEASFVADFVAAWVKVMNADRFDLT.

Positions 98–226 (WHAAGTYRTA…LAAVQMGLIY (129 aa)) form a cross-link, tryptophyl-tyrosyl-methioninium (Trp-Tyr) (with M-252). Residue His99 is the Proton acceptor of the active site. The segment at residues 226–252 (YVNPEGPDGNPDIVASGHDVIETFGRM) is a cross-link (tryptophyl-tyrosyl-methioninium (Tyr-Met) (with W-98)). His267 contributes to the heme b binding site.

Belongs to the peroxidase family. Peroxidase/catalase subfamily. As to quaternary structure, homodimer or homotetramer. Heme b serves as cofactor. Formation of the three residue Trp-Tyr-Met cross-link is important for the catalase, but not the peroxidase activity of the enzyme.

It catalyses the reaction H2O2 + AH2 = A + 2 H2O. The catalysed reaction is 2 H2O2 = O2 + 2 H2O. Bifunctional enzyme with both catalase and broad-spectrum peroxidase activity. The protein is Catalase-peroxidase of Ruegeria pomeroyi (strain ATCC 700808 / DSM 15171 / DSS-3) (Silicibacter pomeroyi).